The primary structure comprises 169 residues: Small ribosomal subunit protein uS5 (169 aa).

The S5 DRBM domain occupies 15–79; sequence LKEQVVAINR…EAAKKNLRRI (65 aa).

This sequence belongs to the universal ribosomal protein uS5 family. As to quaternary structure, part of the 30S ribosomal subunit. Contacts proteins S4 and S8.

Functionally, with S4 and S12 plays an important role in translational accuracy. In terms of biological role, located at the back of the 30S subunit body where it stabilizes the conformation of the head with respect to the body. The polypeptide is Small ribosomal subunit protein uS5 (Solibacter usitatus (strain Ellin6076)).